The chain runs to 529 residues: tRNA pseudouridine synthase Pus10 (529 aa).

2 residues coordinate Zn(2+): Cys21 and Cys24. A coiled-coil region spans residues 42 to 89 (KELLNELQKFLETEKDELILEVMNPPPKKIRLQELEDSIDNLSQNGEG). Ser79 and Ser84 each carry phosphoserine. Positions 109 and 112 each coordinate Zn(2+). Positions 304–317 (TPWIIDGERKLESS) are RNA binding forefinger loop. Asp344 acts as the Nucleophile in catalysis. The interval 442–457 (QKTPLRVLHRRPLAVR) is RNA binding thumb loop.

It belongs to the pseudouridine synthase Pus10 family. Interacts with components of the microprocessor complex DROSHA and DGCR8. Proteolytically cleaved during TRAIL-induced cell death. Cleaved, in vitro, either by caspase-3 (CASP3) or caspase-8 (CASP8).

It localises to the nucleus. The protein localises to the cytoplasm. It is found in the mitochondrion. It carries out the reaction uridine(55) in tRNA = pseudouridine(55) in tRNA. The catalysed reaction is uridine(54) in tRNA = pseudouridine(54) in tRNA. Protein with different functions depending on its subcellular location: involved in miRNA processing in the nucleus and acts as a tRNA pseudouridylate synthase in the cytoplasm. In the cytoplasm, acts as a pseudouridylate synthase by catalyzing synthesis of pseudouridine(54) and pseudouridine(55) from uracil-54 and uracil-55, respectively, in the psi GC loop of a subset of tRNAs. tRNA pseudouridylate synthase activity is enhanced by the presence of 1-methyladenosine at position 53-61 of tRNAs. Does not show tRNA pseudouridylate synthase activity in the nucleus. In the nucleus, promotes primary microRNAs (pri-miRNAs) processing independently of its RNA pseudouridylate synthase activity. Binds pri-miRNAs. Modulator of TRAIL/TNFSF10-induced cell death via activation of procaspase-8 and BID cleavage. Required for the progression of the apoptotic signal through intrinsic mitochondrial cell death. In Homo sapiens (Human), this protein is tRNA pseudouridine synthase Pus10.